We begin with the raw amino-acid sequence, 1195 residues long: MDKILEILKDFGIVELRPPQKKALERGLLDKNKNFLISIPTASGKTLIGEMALINHLLDGNKNPTNKKGIFIVPLKALASEKYEEFKSKYERYGLRIALSIGDYDEDEDLSKYHLIITTAEKLDSLWRHKIDWINDVSVVVVDEIHLINDETRGGTLEILLTKLKEFNVQIIGLSATIGNPDELAEWLNAELIVDDWRPVELKKGIYKNEAIEFINGEIREIKAVDNNDIYNLVVDCVKEGGCCLVFCNTKRNAVNEAKKLNLKKFLTEEEKIRLKEIAEEILSILEPPTEMCKTLAECILNGSAFHHAGLTYQHRKIVEDAFRKRLIKVICCTPTLCLNANTEILQESGFRKITELNKDEKVFALCGKEIKPVDGWKVHKTPQHEYNIVVKTVNGLEITTTPNHIFLVKENGSLKEKEAKDLKVGDYVATVDRIRVKEKDIDLSNGDLYFIGYFIGDGYTGVIEKNTLKATPDLAFNPKYPPNFDDSELHKKYFLKCRISKGVAHYIYSKKLRKIFNKLNMLTKDNKNIDAFCNLPLDKLAYLIAGLFDSDGYIYLNRKNIEFYSISEKLVEQLQFVLLRFGIHSSIRKKKTKTMVSPTNGKEYKCKDIYVLTIRDFMSIKRFYENIPLRHEEKRRKLEEIIKNKEIGQIPSEFVALRFTPIAKIWCDCGFSVDLTMFKPRTKRQRELNKKRVKLLFELLDGKKLITNYKEYYSKRKNPYFDFIVREKINGNNYYSLNEKGRVLMSLLNKHIKDKENLEEMYNFLVNLEKCPICGKPIHKEMRYSWKKECYDGDIYWDRIKEIKKIKVNDKYAYDIELPDDGSNSHYIVANGFIVHNSAGLNLPCRRAIVKDLTRFTNKGMRYIPIMEIQQCIGRAGRPGLDPYGEGIIVAKNDRDYLRAYQALTQKPEPIYSKLSNQAVLRTQLLGLIATGEIRDEYDLEWFIRNTFYAHQYGNLREVAKNINEVIRFLEENEFIIDFMPTELGKRVSELYIDPLSAKFIIDGLEEMENEEEIYYLYLISKTLEMMPNLRVYNSEELNLIDEMDSLGIKSFEIEDLEAFKTAKMLYDWINEVPEDEILKRYKIEPGILRYKVENAVWIMHALKEIAKLIGKSSDIPEKLEIRLEYGAKEDIIELLSIKYIGRVRARKLYNAGIRSIEDIINNPSKVASIIGEKIAKKILDELGVKFGQQKLSF.

ATP-binding positions include glutamine 20 and isoleucine 39–threonine 46. The Helicase ATP-binding domain maps to arginine 26–aspartate 196. A DEAH box motif is present at residues aspartate 143–histidine 146. The DOD-type homing endonuclease domain maps to phenylalanine 451–isoleucine 584.

This sequence belongs to the helicase family. Hel308 subfamily. Monomer. In terms of processing, this protein undergoes a protein self splicing that involves a post-translational excision of the intervening region (intein) followed by peptide ligation.

The catalysed reaction is Couples ATP hydrolysis with the unwinding of duplex DNA by translocating in the 3'-5' direction.. It carries out the reaction ATP + H2O = ADP + phosphate + H(+). DNA-dependent ATPase and 3'-5' DNA helicase that may be involved in repair of stalled replication forks. The polypeptide is ATP-dependent DNA helicase Hel308 (Methanocaldococcus jannaschii (strain ATCC 43067 / DSM 2661 / JAL-1 / JCM 10045 / NBRC 100440) (Methanococcus jannaschii)).